The sequence spans 354 residues: NADH-quinone oxidoreductase subunit H (354 aa).

8 helical membrane-spanning segments follow: residues 16–36 (WLAV…PVMI), 90–110 (YLFI…WAVI), 126–146 (VLYV…SGWA), 170–190 (MGFA…TGIV), 197–217 (IWNW…ISGL), 249–269 (VFFL…AIMF), 290–310 (VPGF…FLWF), and 329–349 (VLIP…YFKV).

Belongs to the complex I subunit 1 family. As to quaternary structure, NDH-1 is composed of 14 different subunits. Subunits NuoA, H, J, K, L, M, N constitute the membrane sector of the complex.

It localises to the cell inner membrane. It catalyses the reaction a quinone + NADH + 5 H(+)(in) = a quinol + NAD(+) + 4 H(+)(out). Functionally, NDH-1 shuttles electrons from NADH, via FMN and iron-sulfur (Fe-S) centers, to quinones in the respiratory chain. The immediate electron acceptor for the enzyme in this species is believed to be ubiquinone. Couples the redox reaction to proton translocation (for every two electrons transferred, four hydrogen ions are translocated across the cytoplasmic membrane), and thus conserves the redox energy in a proton gradient. This subunit may bind ubiquinone. The sequence is that of NADH-quinone oxidoreductase subunit H from Hydrogenovibrio crunogenus (strain DSM 25203 / XCL-2) (Thiomicrospira crunogena).